A 1177-amino-acid chain; its full sequence is DNA-directed RNA polymerase subunit beta' (1177 aa).

Zn(2+)-binding residues include cysteine 60, cysteine 62, cysteine 75, and cysteine 78. Residues aspartate 450, aspartate 452, and aspartate 454 each coordinate Mg(2+). Residues cysteine 795, cysteine 869, cysteine 876, and cysteine 879 each contribute to the Zn(2+) site.

It belongs to the RNA polymerase beta' chain family. As to quaternary structure, the RNAP catalytic core consists of 2 alpha, 1 beta, 1 beta' and 1 omega subunit. When a sigma factor is associated with the core the holoenzyme is formed, which can initiate transcription. The cofactor is Mg(2+). It depends on Zn(2+) as a cofactor.

It carries out the reaction RNA(n) + a ribonucleoside 5'-triphosphate = RNA(n+1) + diphosphate. Its function is as follows. DNA-dependent RNA polymerase catalyzes the transcription of DNA into RNA using the four ribonucleoside triphosphates as substrates. The protein is DNA-directed RNA polymerase subunit beta' of Clostridium botulinum (strain Eklund 17B / Type B).